The following is a 259-amino-acid chain: uncharacterized protein (259 aa).

Glu46 is an active-site residue.

The protein belongs to the PhzF family.

This is an uncharacterized protein from Pseudomonas aeruginosa (strain ATCC 15692 / DSM 22644 / CIP 104116 / JCM 14847 / LMG 12228 / 1C / PRS 101 / PAO1).